A 285-amino-acid chain; its full sequence is Ribosomal protein L11 methyltransferase (285 aa).

The S-adenosyl-L-methionine site is built by threonine 131, glycine 154, aspartate 176, and asparagine 223.

It belongs to the methyltransferase superfamily. PrmA family.

The protein localises to the cytoplasm. It catalyses the reaction L-lysyl-[protein] + 3 S-adenosyl-L-methionine = N(6),N(6),N(6)-trimethyl-L-lysyl-[protein] + 3 S-adenosyl-L-homocysteine + 3 H(+). Methylates ribosomal protein L11. In Brucella melitensis biotype 2 (strain ATCC 23457), this protein is Ribosomal protein L11 methyltransferase.